The following is a 138-amino-acid chain: ATP synthase epsilon chain (138 aa).

This sequence belongs to the ATPase epsilon chain family. As to quaternary structure, F-type ATPases have 2 components, CF(1) - the catalytic core - and CF(0) - the membrane proton channel. CF(1) has five subunits: alpha(3), beta(3), gamma(1), delta(1), epsilon(1). CF(0) has three main subunits: a, b and c.

Its subcellular location is the cell inner membrane. Produces ATP from ADP in the presence of a proton gradient across the membrane. In Delftia acidovorans (strain DSM 14801 / SPH-1), this protein is ATP synthase epsilon chain.